We begin with the raw amino-acid sequence, 521 residues long: Ribonuclease Y (521 aa).

The chain crosses the membrane as a helical span at residues Thr5–Val25. Positions Lys87–Glu117 are disordered. Residues Thr211 to Leu274 form the KH domain. Residues Val337–Ala430 enclose the HD domain.

This sequence belongs to the RNase Y family.

Its subcellular location is the cell membrane. Functionally, endoribonuclease that initiates mRNA decay. The protein is Ribonuclease Y of Bacillus mycoides (strain KBAB4) (Bacillus weihenstephanensis).